The chain runs to 453 residues: Succinate-semialdehyde dehydrogenase (acetylating) (453 aa).

NADP(+) is bound at residue 188–193 (ATGGAG). Residue Cys-242 is part of the active site.

In terms of assembly, homodimer.

It carries out the reaction succinate semialdehyde + NADP(+) + CoA = succinyl-CoA + NADPH + H(+). In terms of biological role, catalyzes the reduction of succinate semialdehyde to succinyl-CoA. The enzyme is specific for succinate semialdehyde and succinyl-CoA, and only shows low activity with palmitoyl-CoA. There is no activity with NAD(+) as cosubstrate. The protein is Succinate-semialdehyde dehydrogenase (acetylating) (sucD) of Clostridium kluyveri (strain ATCC 8527 / DSM 555 / NBRC 12016 / NCIMB 10680 / K1).